Consider the following 330-residue polypeptide: Methionyl-tRNA formyltransferase (330 aa).

121–124 serves as a coordination point for (6S)-5,6,7,8-tetrahydrofolate; that stretch reads SLLP.

This sequence belongs to the Fmt family.

It carries out the reaction L-methionyl-tRNA(fMet) + (6R)-10-formyltetrahydrofolate = N-formyl-L-methionyl-tRNA(fMet) + (6S)-5,6,7,8-tetrahydrofolate + H(+). In terms of biological role, attaches a formyl group to the free amino group of methionyl-tRNA(fMet). The formyl group appears to play a dual role in the initiator identity of N-formylmethionyl-tRNA by promoting its recognition by IF2 and preventing the misappropriation of this tRNA by the elongation apparatus. This is Methionyl-tRNA formyltransferase from Burkholderia cenocepacia (strain HI2424).